A 99-amino-acid polypeptide reads, in one-letter code: Small ribosomal subunit protein bS20 (99 aa).

This sequence belongs to the bacterial ribosomal protein bS20 family.

Its function is as follows. Binds directly to 16S ribosomal RNA. This is Small ribosomal subunit protein bS20 from Picosynechococcus sp. (strain ATCC 27264 / PCC 7002 / PR-6) (Agmenellum quadruplicatum).